Here is a 396-residue protein sequence, read N- to C-terminus: 1-deoxy-D-xylulose 5-phosphate reductoisomerase (396 aa).

T13, G14, S15, I16, and N127 together coordinate NADPH. K128 is a 1-deoxy-D-xylulose 5-phosphate binding site. E129 contacts NADPH. Position 153 (D153) interacts with Mn(2+). The 1-deoxy-D-xylulose 5-phosphate site is built by S154, E155, S184, and H207. Residue E155 participates in Mn(2+) binding. G213 provides a ligand contact to NADPH. 1-deoxy-D-xylulose 5-phosphate contacts are provided by S220, N225, K226, and E229. E229 provides a ligand contact to Mn(2+).

Belongs to the DXR family. The cofactor is Mg(2+). It depends on Mn(2+) as a cofactor.

It carries out the reaction 2-C-methyl-D-erythritol 4-phosphate + NADP(+) = 1-deoxy-D-xylulose 5-phosphate + NADPH + H(+). The protein operates within isoprenoid biosynthesis; isopentenyl diphosphate biosynthesis via DXP pathway; isopentenyl diphosphate from 1-deoxy-D-xylulose 5-phosphate: step 1/6. Functionally, catalyzes the NADPH-dependent rearrangement and reduction of 1-deoxy-D-xylulose-5-phosphate (DXP) to 2-C-methyl-D-erythritol 4-phosphate (MEP). This chain is 1-deoxy-D-xylulose 5-phosphate reductoisomerase, found in Pseudomonas syringae pv. syringae (strain B728a).